A 96-amino-acid polypeptide reads, in one-letter code: C-C motif chemokine 20 (96 aa).

A signal peptide spans 1–26 (MMCSSKNLLLAALMSVLLLHFCSKSE). 2 cysteine pairs are disulfide-bonded: Cys-32/Cys-58 and Cys-33/Cys-74.

It belongs to the intercrine beta (chemokine CC) family.

It is found in the secreted. Its function is as follows. Acts as a ligand for C-C chemokine receptor CCR6. Signals through binding and activation of CCR6 and induces a strong chemotactic response and mobilization of intracellular calcium ions. The ligand-receptor pair CCL20-CCR6 is responsible for the chemotaxis of dendritic cells (DC), effector/memory T-cells and B-cells and plays an important role at skin and mucosal surfaces under homeostatic and inflammatory conditions, as well as in pathology, including cancer and autoimmune diseases. CCL20 acts as a chemotactic factor that attracts lymphocytes and, slightly, neutrophils, but not monocytes. Involved in the recruitment of both the pro-inflammatory IL17 producing helper T-cells (Th17) and the regulatory T-cells (Treg) to sites of inflammation. Required for optimal migration of thymic natural regulatory T cells (nTregs) and DN1 early thymocyte progenitor cells. Positively regulates sperm motility and chemotaxis via its binding to CCR6 which triggers Ca2+ mobilization in the sperm which is important for its motility. May be involved in formation and function of the mucosal lymphoid tissues by attracting lymphocytes and dendritic cells towards epithelial cells. The polypeptide is C-C motif chemokine 20 (CCL20) (Bos taurus (Bovine)).